The following is a 445-amino-acid chain: MVESIAAGQVGDNKHIEMWKIKRLINKLENCKGNGTSMVSLIIPPKEDINKSGKLLVGELSAAQNIKSRITRQSVITAITSTKEKLKLYRQTPTNGLCIYCGVILMEDGKTEKKINFDFEPFRPINQFMYFCGGKFQTEPLTTLLADDDKFGFIIVDGNGALYATLQGNSREILQKITVELPKKHRKGGQSSVRFARLREEKRHNYLRKVAELAGSNFITNDKPNVTGLVLAGNAGFKNELSETDMLDKRLLPIIVSIVDVSYGGENGLNEAITLSADALTNVKFVAEKKLVSTFFEQISLDTGMIVFGVQDTMKALELGAVETILLFEELEITRYVIKNPVKGDTRTLFLNPTQQKDSKYFKDQASGLDMDVIAEDQLAEWLCHNYQNYGAQVEFITDKSQEGYQFVKGFGGIGGFLRYKVDMEDALGDVGDGGDDFDPDTDFI.

The protein belongs to the eukaryotic release factor 1 family. In terms of assembly, heterodimer of two subunits, one of which binds GTP.

The protein localises to the cytoplasm. In terms of biological role, directs the termination of nascent peptide synthesis (translation) in response to the termination codon UGA. In Stylonchia UAA and UAG codes for glutamine. The polypeptide is Eukaryotic peptide chain release factor subunit 1 (ERF1) (Stylonychia lemnae (Ciliate)).